The chain runs to 102 residues: Co-chaperonin GroES (102 aa).

This sequence belongs to the GroES chaperonin family. In terms of assembly, heptamer of 7 subunits arranged in a ring. Interacts with the chaperonin GroEL.

The protein resides in the cytoplasm. Functionally, together with the chaperonin GroEL, plays an essential role in assisting protein folding. The GroEL-GroES system forms a nano-cage that allows encapsulation of the non-native substrate proteins and provides a physical environment optimized to promote and accelerate protein folding. GroES binds to the apical surface of the GroEL ring, thereby capping the opening of the GroEL channel. The protein is Co-chaperonin GroES of Vibrio harveyi (Beneckea harveyi).